The primary structure comprises 86 residues: U15-lycotoxin-Ls1c (86 aa).

The first 20 residues, 1-20 (MNSKIFAVLLLLAFLSCVLS), serve as a signal peptide directing secretion. One can recognise a WAP domain in the interval 21–66 (DQYCPKSSITACKKMNIRNDCCKDDDCTGGSWCCATPCGNICKYPT). 5 disulfide bridges follow: Cys24/Cys54, Cys32/Cys58, Cys41/Cys53, Cys42/Cys80, and Cys47/Cys62.

The protein belongs to the venom protein 11 family. 01 (wap-1) subfamily. Contains 5 disulfide bonds. In terms of tissue distribution, expressed by the venom gland.

The protein resides in the secreted. Has antibacterial activity. This chain is U15-lycotoxin-Ls1c, found in Lycosa singoriensis (Wolf spider).